The chain runs to 121 residues: Small ribosomal subunit protein uS13 (121 aa).

The segment at 90-121 is disordered; sequence RHRHGLPVRGQHTKNNARTRKGKAVAIAGKKK.

It belongs to the universal ribosomal protein uS13 family. In terms of assembly, part of the 30S ribosomal subunit. Forms a loose heterodimer with protein S19. Forms two bridges to the 50S subunit in the 70S ribosome.

In terms of biological role, located at the top of the head of the 30S subunit, it contacts several helices of the 16S rRNA. In the 70S ribosome it contacts the 23S rRNA (bridge B1a) and protein L5 of the 50S subunit (bridge B1b), connecting the 2 subunits; these bridges are implicated in subunit movement. Contacts the tRNAs in the A and P-sites. The polypeptide is Small ribosomal subunit protein uS13 (Limosilactobacillus fermentum (strain NBRC 3956 / LMG 18251) (Lactobacillus fermentum)).